Consider the following 335-residue polypeptide: UPF0353 protein MAP_3435c (335 aa).

2 helical membrane-spanning segments follow: residues 18 to 38 (WFFL…VQQF) and 67 to 87 (VPTI…AGPT). The 197-residue stretch at 98–294 (VVMLVIDVSE…DSLKNVYSTL (197 aa)) folds into the VWFA domain. A helical transmembrane segment spans residues 309–329 (MAWMLLGAVVLAGAVLAGLLL).

Belongs to the UPF0353 family.

The protein resides in the cell membrane. The protein is UPF0353 protein MAP_3435c of Mycolicibacterium paratuberculosis (strain ATCC BAA-968 / K-10) (Mycobacterium paratuberculosis).